We begin with the raw amino-acid sequence, 336 residues long: Probable magnesium transporter NIPA2 (336 aa).

Topologically, residues Met-1–Asp-7 are extracellular. A helical membrane pass occupies residues Asn-8–Ile-28. Residues Lys-29–Trp-55 are Cytoplasmic-facing. A helical transmembrane segment spans residues Trp-56 to Phe-76. The Extracellular portion of the chain corresponds to Ala-77 to Ala-79. A helical transmembrane segment spans residues Ile-80–Ile-100. Residues Leu-101 to Lys-104 are Cytoplasmic-facing. A helical membrane pass occupies residues Leu-105 to Leu-125. The Extracellular portion of the chain corresponds to His-126 to Glu-145. A helical membrane pass occupies residues Pro-146–Tyr-166. Residues Glu-167–Val-179 lie on the Cytoplasmic side of the membrane. Residues Gly-180–Ile-200 form a helical membrane-spanning segment. Residues Lys-201–Tyr-212 lie on the Extracellular side of the membrane. The helical transmembrane segment at Phe-213–Leu-233 threads the bilayer. Topologically, residues Asn-234 to Val-244 are cytoplasmic. The chain crosses the membrane as a helical span at residues Ile-245–Phe-265. The Extracellular portion of the chain corresponds to Lys-266 to Ser-272. The helical transmembrane segment at Gly-273–Leu-293 threads the bilayer. Residues His-294–Leu-336 are Cytoplasmic-facing. The segment at Thr-303–Leu-336 is disordered. Residues Asn-321–Ser-330 show a composition bias toward low complexity.

It belongs to the NIPA (TC 2.A.7) family. As to quaternary structure, homodimer.

The protein localises to the cell membrane. Its subcellular location is the early endosome. In terms of biological role, acts as a Mg(2+) transporter. Can also transport other divalent cations such as Fe(2+), Sr(2+), Ba(2+), Mn(2+) and Co(2+) but to a much less extent than Mg(2+). The chain is Probable magnesium transporter NIPA2 from Arabidopsis thaliana (Mouse-ear cress).